A 300-amino-acid polypeptide reads, in one-letter code: 17-beta-hydroxysteroid dehydrogenase 13 (300 aa).

The signal sequence occupies residues 1–19; it reads MNIILEILLLLITIIYSYL. Ser-33 is subject to Phosphoserine. NAD(+) is bound at residue 40-67; that stretch reads LITGAGHGIGRQTTYEFAKRQSILVLWD. Ser-172 is a substrate binding site. Residue Tyr-185 is the Proton acceptor of the active site. NAD(+) is bound at residue Lys-189.

The protein belongs to the short-chain dehydrogenases/reductases (SDR) family. In terms of tissue distribution, highly expressed in the liver. Also detected in ovary, bone marrow, kidney, brain, lung, skeletal muscle, bladder and testis.

It localises to the lipid droplet. It is found in the endoplasmic reticulum. The protein resides in the cytoplasm. It catalyses the reaction 17beta-estradiol + NAD(+) = estrone + NADH + H(+). It carries out the reaction all-trans-retinol + NAD(+) = all-trans-retinal + NADH + H(+). The enzyme catalyses all-trans-retinal + NAD(+) + H2O = all-trans-retinoate + NADH + 2 H(+). Plays a pivotal role in hepatic lipid metabolism. In vitro, it catalyzes the oxidation of a variety of lipid substrates, including 17beta-estradiol, retinol, retinal, and leukotriene B4. In terms of biological role, has retinol/retinal dehydrogenase activity in vitro. Its function is as follows. Does not have retinol/retinal dehydrogenase activity in vitro. The polypeptide is 17-beta-hydroxysteroid dehydrogenase 13 (Homo sapiens (Human)).